Reading from the N-terminus, the 475-residue chain is Ribulose bisphosphate carboxylase large chain (475 aa).

Residues 1-2 (MS) constitute a propeptide that is removed on maturation. Pro3 bears the N-acetylproline mark. Position 14 is an N6,N6,N6-trimethyllysine (Lys14). 2 residues coordinate substrate: Asn123 and Thr173. Lys175 functions as the Proton acceptor in the catalytic mechanism. Position 177 (Lys177) interacts with substrate. Residues Lys201, Asp203, and Glu204 each contribute to the Mg(2+) site. Position 201 is an N6-carboxylysine (Lys201). The Proton acceptor role is filled by His294. Residues Arg295, His327, and Ser379 each contribute to the substrate site.

This sequence belongs to the RuBisCO large chain family. Type I subfamily. As to quaternary structure, heterohexadecamer of 8 large chains and 8 small chains; disulfide-linked. The disulfide link is formed within the large subunit homodimers. It depends on Mg(2+) as a cofactor. Post-translationally, the disulfide bond which can form in the large chain dimeric partners within the hexadecamer appears to be associated with oxidative stress and protein turnover.

The protein resides in the plastid. Its subcellular location is the chloroplast. It catalyses the reaction 2 (2R)-3-phosphoglycerate + 2 H(+) = D-ribulose 1,5-bisphosphate + CO2 + H2O. It carries out the reaction D-ribulose 1,5-bisphosphate + O2 = 2-phosphoglycolate + (2R)-3-phosphoglycerate + 2 H(+). Functionally, ruBisCO catalyzes two reactions: the carboxylation of D-ribulose 1,5-bisphosphate, the primary event in carbon dioxide fixation, as well as the oxidative fragmentation of the pentose substrate in the photorespiration process. Both reactions occur simultaneously and in competition at the same active site. This Lotus japonicus (Lotus corniculatus var. japonicus) protein is Ribulose bisphosphate carboxylase large chain.